Here is a 283-residue protein sequence, read N- to C-terminus: Release factor glutamine methyltransferase (283 aa).

D143 and N189 together coordinate S-adenosyl-L-methionine. 189 to 192 (NPPY) contacts substrate.

This sequence belongs to the protein N5-glutamine methyltransferase family. PrmC subfamily.

The enzyme catalyses L-glutaminyl-[peptide chain release factor] + S-adenosyl-L-methionine = N(5)-methyl-L-glutaminyl-[peptide chain release factor] + S-adenosyl-L-homocysteine + H(+). Methylates the class 1 translation termination release factors RF1/PrfA and RF2/PrfB on the glutamine residue of the universally conserved GGQ motif. This chain is Release factor glutamine methyltransferase, found in Clostridium botulinum (strain Hall / ATCC 3502 / NCTC 13319 / Type A).